The sequence spans 637 residues: Chaperone protein HtpG (637 aa).

Residues 1-338 (MTSTIDKNGA…SADLPLNISR (338 aa)) are a; substrate-binding. The tract at residues 339-552 (EMIQESPILA…ESGPDRQLEK (214 aa)) is b. The segment at 553-637 (ILLGVGQLAG…LRRSSAGGGD (85 aa)) is c.

This sequence belongs to the heat shock protein 90 family. As to quaternary structure, homodimer.

It localises to the cytoplasm. In terms of biological role, molecular chaperone. Has ATPase activity. The sequence is that of Chaperone protein HtpG from Nitrobacter winogradskyi (strain ATCC 25391 / DSM 10237 / CIP 104748 / NCIMB 11846 / Nb-255).